A 347-amino-acid chain; its full sequence is Probable inactive UDP-arabinopyranose mutase 2 (347 aa).

Residue Arg-145 is glycosylated (N-linked (Glc...) arginine).

It belongs to the RGP family. In terms of assembly, heteromers with UAM1 and UAM3. Post-translationally, is not reversibly glycosylated in vitro by UDP-glucose, UDP-xylose and UDP-galactose.

It is found in the golgi apparatus. Its function is as follows. Probable inactive UDP-L-arabinose mutase. Inactive in vitro, but associates with UAM1 and UAM3. The chain is Probable inactive UDP-arabinopyranose mutase 2 from Oryza sativa subsp. japonica (Rice).